The following is a 25-amino-acid chain: Unknown protein 7 (25 aa).

Residues 1–25 form a disordered region; that stretch reads MENGKVHVASMSGLSMPHMNEMLEK.

The protein is Unknown protein 7 of Pseudotsuga menziesii (Douglas-fir).